Consider the following 540-residue polypeptide: Chaperonin GroEL (540 aa).

ATP-binding positions include 30 to 33 (TLAP), lysine 51, 87 to 91 (DGTTT), glycine 415, 479 to 481 (NAA), and aspartate 495.

This sequence belongs to the chaperonin (HSP60) family. In terms of assembly, forms a cylinder of 14 subunits composed of two heptameric rings stacked back-to-back. Interacts with the co-chaperonin GroES.

The protein localises to the cytoplasm. It carries out the reaction ATP + H2O + a folded polypeptide = ADP + phosphate + an unfolded polypeptide.. Functionally, together with its co-chaperonin GroES, plays an essential role in assisting protein folding. The GroEL-GroES system forms a nano-cage that allows encapsulation of the non-native substrate proteins and provides a physical environment optimized to promote and accelerate protein folding. In Methylovorus sp. (strain SS1 / DSM 11726), this protein is Chaperonin GroEL.